We begin with the raw amino-acid sequence, 194 residues long: Adenylate kinase (194 aa).

G10–T15 is a binding site for ATP. Residues S30–V59 are NMP. Residues T31, R36, G57–V59, G85–R88, and Q92 each bind AMP. The segment at N126 to D142 is LID. R127 provides a ligand contact to ATP. Positions 139 and 150 each coordinate AMP. A178 contacts ATP.

This sequence belongs to the adenylate kinase family. In terms of assembly, monomer.

The protein resides in the cytoplasm. The catalysed reaction is AMP + ATP = 2 ADP. It participates in purine metabolism; AMP biosynthesis via salvage pathway; AMP from ADP: step 1/1. Its function is as follows. Catalyzes the reversible transfer of the terminal phosphate group between ATP and AMP. Plays an important role in cellular energy homeostasis and in adenine nucleotide metabolism. The polypeptide is Adenylate kinase (Azorhizobium caulinodans (strain ATCC 43989 / DSM 5975 / JCM 20966 / LMG 6465 / NBRC 14845 / NCIMB 13405 / ORS 571)).